The primary structure comprises 770 residues: Disabled homolog 2 (770 aa).

Over residues 1–16 (MSNEVETSATNGQPDQ) the composition is skewed to polar residues. A disordered region spans residues 1 to 38 (MSNEVETSATNGQPDQQAAPKAPSKKEKKKGPEKTDEY). S2 carries the N-acetylserine modification. Phosphoserine is present on S2. Positions 45 to 196 (GDGVKYKAKL…KAVENGSEAL (152 aa)) constitute a PID domain. At Y170 the chain carries Phosphotyrosine. Residue S193 is modified to Phosphoserine. Residues 230 to 447 (ESKDILLVDL…KPGRGRRTAK (218 aa)) form a required for localization to clathrin-coated pits region. 2 disordered regions span residues 284-482 (LNFF…LQPN) and 604-629 (VSTQ…AGPP). 2 consecutive short sequence motifs (DPF) follow at residues 293 to 295 (DPF) and 298 to 300 (DPF). Over residues 302-313 (QPDQSTPSSFDS) the composition is skewed to polar residues. Phosphoserine; in mitosis occurs at positions 326 and 328. The segment covering 366–396 (FSSSQTQPAVRTQNGVSEREQNGFSVKSSPN) has biased composition (polar residues). At S401 the chain carries Phosphoserine. 3 stretches are compositionally biased toward polar residues: residues 407-425 (SIQN…SSPH), 466-480 (PSGQ…TALQ), and 604-616 (VSTQ…SSLL). The tract at residues 604 to 732 (VSTQPPSMHS…SLPVTKSTDN (129 aa)) is sufficient for interaction with GRB2. Residues 619-627 (PPQPPPRAG) are required for interaction with CSK. The tract at residues 649–770 (KDVKEMFKDF…YRDPFGNPFA (122 aa)) is required for interaction with MYO6. Residues 663–671 (PPAVPARKG) form a required for interaction with GRB2 and CSK region. A phosphoserine mark is found at S675, S723, and S729. The tract at residues 709 to 725 (NKINEPPKPAPRQVSLP) is sufficient for interaction with SH3KBP1 SH3 domain. Residues 742–770 (SFGSSQASVASSQPVSSEMYRDPFGNPFA) are disordered. The segment covering 745 to 758 (SSQASVASSQPVSS) has biased composition (low complexity).

In terms of assembly, interacts (via NPXY motif) with DAB2 (via PID domain). Can interact (via PID domain) with LDLR, APP, APLP1 and APLP2, and weakly with INPP5D (via NPXY motifs); the interaction is impaired by tyrosine phosphorylation of the respective NPXY motifs. Can weakly interact (via PID domain) with LRP1 (via NPXY motif); the interaction is enhanced by tyrosine phosphorylation of the NPXY motif. Interacts with LRP2 (via NPXY motif); the interaction is not affected by tyrosine phosphorylation of the NPXY motif. Interacts with clathrin; in vitro can assemble clathrin triskelia into polyhedral coats. Interacts with AP2A2, ITGB1, ITGB3, ITGB5, PIAS2, DAB2IP, NOSTRIN, FCHO1, DVL3, EPS15, ITSN1 and EPS15L1. Interacts with SH3KBP1 (via SH3 domains). Interacts with GRB2; competes with SOS1 for binding to GRB2 and the interaction is enhanced by EGF and NT-3 stimulation. Interacts with MAP3K7; the interaction is induced by TGF-beta stimulation and may mediate TGF-beta stimulated JNK activation. Interacts with AXIN1 and PPP1CA; the interactions are mutually exclusive. Interacts with the globular tail of MYO6. Interacts (via DPF motifs) with FCHO2; the interaction is direct and required for DAB2-mediated LDLR endocytosis. Interacts with LRP6; the interaction involves LRP6 phosphorylation by CK2 and sequesters LRP6 towards clathrin-mediated endocytosis. Associates with the TGF-beta receptor complex. Interacts with SMAD2 and SMAD3; the interactions are enhanced upon TGF-beta stimulation. Interacts with GRB2; the interaction is enhanced by EGF and NT-3 stimulation. Interacts with SRC; the interaction is enhanced by EGF stimulation. Post-translationally, phosphorylated. Phosphorylation during mitosis is leading to membrane displacement. In terms of tissue distribution, expressed in deep invaginations, inclusion cysts and the surface epithelial cells of the ovary. Also expressed in breast epithelial cells, spleen, thymus, prostate, testis, macrophages, fibroblasts, lung epithelial cells, placenta, brain stem, heart and small intestine. Expressed in kidney proximal tubular epithelial cells (at protein level).

It localises to the cytoplasm. The protein resides in the cytoplasmic vesicle. It is found in the clathrin-coated vesicle membrane. The protein localises to the membrane. Its subcellular location is the clathrin-coated pit. Functionally, adapter protein that functions as a clathrin-associated sorting protein (CLASP) required for clathrin-mediated endocytosis of selected cargo proteins. Can bind and assemble clathrin, and binds simultaneously to phosphatidylinositol 4,5-bisphosphate (PtdIns(4,5)P2) and cargos containing non-phosphorylated NPXY internalization motifs, such as the LDL receptor, to recruit them to clathrin-coated pits. Can function in clathrin-mediated endocytosis independently of the AP-2 complex. Involved in endocytosis of integrin beta-1; this function seems to redundant with the AP-2 complex and seems to require DAB2 binding to endocytosis accessory EH domain-containing proteins such as EPS15, EPS15L1 and ITSN1. Involved in endocytosis of cystic fibrosis transmembrane conductance regulator/CFTR. Involved in endocytosis of megalin/LRP2 lipoprotein receptor during embryonal development. Required for recycling of the TGF-beta receptor. Involved in CFTR trafficking to the late endosome. Involved in several receptor-mediated signaling pathways. Involved in TGF-beta receptor signaling and facilitates phosphorylation of the signal transducer SMAD2. Mediates TFG-beta-stimulated JNK activation. May inhibit the canoniocal Wnt/beta-catenin signaling pathway by stabilizing the beta-catenin destruction complex through a competing association with axin preventing its dephosphorylation through protein phosphatase 1 (PP1). Sequesters LRP6 towards clathrin-mediated endocytosis, leading to inhibition of Wnt/beta-catenin signaling. May activate non-canonical Wnt signaling. In cell surface growth factor/Ras signaling pathways proposed to inhibit ERK activation by interrupting the binding of GRB2 to SOS1 and to inhibit SRC by preventing its activating phosphorylation at 'Tyr-419'. Proposed to be involved in modulation of androgen receptor (AR) signaling mediated by SRC activation; seems to compete with AR for interaction with SRC. Plays a role in the CSF-1 signal transduction pathway. Plays a role in cellular differentiation. Involved in cell positioning and formation of visceral endoderm (VE) during embryogenesis and proposed to be required in the VE to respond to Nodal signaling coming from the epiblast. Required for the epithelial to mesenchymal transition, a process necessary for proper embryonic development. May be involved in myeloid cell differentiation and can induce macrophage adhesion and spreading. May act as a tumor suppressor. In Homo sapiens (Human), this protein is Disabled homolog 2 (DAB2).